A 108-amino-acid chain; its full sequence is uncharacterized protein (108 aa).

The disordered stretch occupies residues 56 to 108; sequence ELPSRGCLPAPRPESGQGRLSTGISQNGGRSSAQPCPRCIAGESGHFSHTKNH. Over residues 73–89 the composition is skewed to polar residues; the sequence is GRLSTGISQNGGRSSAQ.

This is an uncharacterized protein from Homo sapiens (Human).